Reading from the N-terminus, the 213-residue chain is Ras-related protein Rab-25 (213 aa).

Residues Ser-21, Gly-24, Lys-25, Thr-26, Asn-27, Ser-38, His-39, Thr-43, and Thr-44 each coordinate GTP. Thr-26 serves as a coordination point for Mg(2+). 2 short sequence motifs (switch) span residues Asn-35–Phe-49 and Asp-67–Gly-84. Positions 44 and 67 each coordinate Mg(2+). GTP contacts are provided by Gly-70, Asn-125, Lys-126, Asp-128, Ala-156, and Leu-157. Residues Cys-209 and Cys-210 are each lipidated (S-geranylgeranyl cysteine). Cys-210 is subject to Cysteine methyl ester. The propeptide at Ile-211–Leu-213 is removed in mature form.

It belongs to the small GTPase superfamily. Rab family. In terms of assembly, interacts (GTP-bound form) with RAB11FIP1, RAB11FIP2, RAB11FIP3 and RAB11FIP4. Interacts (via the hypervariable C-terminal region) with ITGB1 (via the cytoplasmic region); the interaction is GTP-dependent. Interacts with ITGAV. Associates with the integrin alpha-V/beta-1 heterodimer. Interacts with VPS33B. Mg(2+) serves as cofactor.

The protein resides in the cell membrane. It localises to the cell projection. It is found in the pseudopodium membrane. Its subcellular location is the cytoplasmic vesicle. It catalyses the reaction GTP + H2O = GDP + phosphate + H(+). Its activity is regulated as follows. Regulated by guanine nucleotide exchange factors (GEFs) which promote the exchange of bound GDP for free GTP. Regulated by GTPase activating proteins (GAPs) which increase the GTP hydrolysis activity. Inhibited by GDP dissociation inhibitors (GDIs) which prevent Rab-GDP dissociation. The small GTPases Rab are key regulators of intracellular membrane trafficking, from the formation of transport vesicles to their fusion with membranes. Rabs cycle between an inactive GDP-bound form and an active GTP-bound form that is able to recruit to membranes different set of downstream effectors directly responsible for vesicle formation, movement, tethering and fusion. RAB25 regulates epithelial cell differentiation, proliferation and survival, thereby playing key roles in tumorigenesis. Promotes invasive migration of cells in which it functions to localize and maintain integrin alpha-V/beta-1 at the tips of extending pseudopodia. Involved in the regulation of epithelial morphogenesis through the control of CLDN4 expression and localization at tight junctions. May selectively regulate the apical recycling pathway. Together with MYO5B regulates transcytosis. The polypeptide is Ras-related protein Rab-25 (Mus musculus (Mouse)).